An 82-amino-acid chain; its full sequence is Cytochrome b559 subunit alpha (82 aa).

Residues 22-36 (VIHSITIPALFIAGW) form a helical membrane-spanning segment. His24 serves as a coordination point for heme.

It belongs to the PsbE/PsbF family. Heterodimer of an alpha subunit and a beta subunit. PSII is composed of 1 copy each of membrane proteins PsbA, PsbB, PsbC, PsbD, PsbE, PsbF, PsbH, PsbI, PsbJ, PsbK, PsbL, PsbM, PsbT, PsbX, PsbY, PsbZ, Psb30/Ycf12, peripheral proteins PsbO, CyanoQ (PsbQ), PsbU, PsbV and a large number of cofactors. It forms dimeric complexes. It depends on heme b as a cofactor.

The protein resides in the cellular thylakoid membrane. In terms of biological role, this b-type cytochrome is tightly associated with the reaction center of photosystem II (PSII). PSII is a light-driven water:plastoquinone oxidoreductase that uses light energy to abstract electrons from H(2)O, generating O(2) and a proton gradient subsequently used for ATP formation. It consists of a core antenna complex that captures photons, and an electron transfer chain that converts photonic excitation into a charge separation. The polypeptide is Cytochrome b559 subunit alpha (Trichodesmium erythraeum (strain IMS101)).